Here is a 161-residue protein sequence, read N- to C-terminus: NADH-quinone oxidoreductase subunit I (161 aa).

4Fe-4S ferredoxin-type domains lie at 52-82 (LRRY…IESS) and 92-121 (TRYD…QGPN). Cysteine 62, cysteine 65, cysteine 68, cysteine 72, cysteine 101, cysteine 104, cysteine 107, and cysteine 111 together coordinate [4Fe-4S] cluster.

Belongs to the complex I 23 kDa subunit family. As to quaternary structure, NDH-1 is composed of 14 different subunits. Subunits NuoA, H, J, K, L, M, N constitute the membrane sector of the complex. It depends on [4Fe-4S] cluster as a cofactor.

The protein localises to the cell inner membrane. The enzyme catalyses a quinone + NADH + 5 H(+)(in) = a quinol + NAD(+) + 4 H(+)(out). NDH-1 shuttles electrons from NADH, via FMN and iron-sulfur (Fe-S) centers, to quinones in the respiratory chain. The immediate electron acceptor for the enzyme in this species is believed to be ubiquinone. Couples the redox reaction to proton translocation (for every two electrons transferred, four hydrogen ions are translocated across the cytoplasmic membrane), and thus conserves the redox energy in a proton gradient. This is NADH-quinone oxidoreductase subunit I from Pelagibacter ubique (strain HTCC1062).